The following is a 608-amino-acid chain: Glutamine--fructose-6-phosphate aminotransferase [isomerizing] (608 aa).

The Nucleophile; for GATase activity role is filled by Cys-2. Positions 2–217 (CGIVGYIGDK…DHEIAIIKKD (216 aa)) constitute a Glutamine amidotransferase type-2 domain. SIS domains follow at residues 285-424 (TKED…KKGT) and 453-598 (VIQK…VDKP). Lys-603 acts as the For Fru-6P isomerization activity in catalysis.

Homodimer.

It localises to the cytoplasm. The catalysed reaction is D-fructose 6-phosphate + L-glutamine = D-glucosamine 6-phosphate + L-glutamate. Functionally, catalyzes the first step in hexosamine metabolism, converting fructose-6P into glucosamine-6P using glutamine as a nitrogen source. The protein is Glutamine--fructose-6-phosphate aminotransferase [isomerizing] of Caldanaerobacter subterraneus subsp. tengcongensis (strain DSM 15242 / JCM 11007 / NBRC 100824 / MB4) (Thermoanaerobacter tengcongensis).